The chain runs to 341 residues: N-acetyl-gamma-glutamyl-phosphate reductase (341 aa).

Cysteine 147 is a catalytic residue.

This sequence belongs to the NAGSA dehydrogenase family. Type 1 subfamily.

The protein localises to the cytoplasm. The enzyme catalyses N-acetyl-L-glutamate 5-semialdehyde + phosphate + NADP(+) = N-acetyl-L-glutamyl 5-phosphate + NADPH + H(+). Its pathway is amino-acid biosynthesis; L-arginine biosynthesis; N(2)-acetyl-L-ornithine from L-glutamate: step 3/4. In terms of biological role, catalyzes the NADPH-dependent reduction of N-acetyl-5-glutamyl phosphate to yield N-acetyl-L-glutamate 5-semialdehyde. This chain is N-acetyl-gamma-glutamyl-phosphate reductase, found in Staphylococcus epidermidis (strain ATCC 35984 / DSM 28319 / BCRC 17069 / CCUG 31568 / BM 3577 / RP62A).